The chain runs to 277 residues: Large ribosomal subunit protein uL2 (277 aa).

The tract at residues 223-261 is disordered; the sequence is SVMNPNDHPHGGGEGKSPVGRPSPVTPWGKPALGYKTRK.

The protein belongs to the universal ribosomal protein uL2 family. As to quaternary structure, part of the 50S ribosomal subunit. Forms a bridge to the 30S subunit in the 70S ribosome.

In terms of biological role, one of the primary rRNA binding proteins. Required for association of the 30S and 50S subunits to form the 70S ribosome, for tRNA binding and peptide bond formation. It has been suggested to have peptidyltransferase activity; this is somewhat controversial. Makes several contacts with the 16S rRNA in the 70S ribosome. This Clostridium botulinum (strain Alaska E43 / Type E3) protein is Large ribosomal subunit protein uL2.